The sequence spans 38 residues: Large ribosomal subunit protein bL36 (38 aa).

It belongs to the bacterial ribosomal protein bL36 family.

The chain is Large ribosomal subunit protein bL36 from Synechocystis sp. (strain ATCC 27184 / PCC 6803 / Kazusa).